The sequence spans 292 residues: Elongation factor Ts (292 aa).

The involved in Mg(2+) ion dislocation from EF-Tu stretch occupies residues 79–82 (TDFV).

Belongs to the EF-Ts family.

It is found in the cytoplasm. In terms of biological role, associates with the EF-Tu.GDP complex and induces the exchange of GDP to GTP. It remains bound to the aminoacyl-tRNA.EF-Tu.GTP complex up to the GTP hydrolysis stage on the ribosome. In Idiomarina loihiensis (strain ATCC BAA-735 / DSM 15497 / L2-TR), this protein is Elongation factor Ts (tsf).